The following is a 375-amino-acid chain: DNA replication and repair protein RecF (375 aa).

ATP is bound at residue 30–37 (GNNAQGKS).

The protein belongs to the RecF family.

The protein localises to the cytoplasm. Its function is as follows. The RecF protein is involved in DNA metabolism; it is required for DNA replication and normal SOS inducibility. RecF binds preferentially to single-stranded, linear DNA. It also seems to bind ATP. The protein is DNA replication and repair protein RecF of Microcystis aeruginosa (strain NIES-843 / IAM M-2473).